The primary structure comprises 545 residues: ATP synthase subunit alpha (545 aa).

Position 173-180 (173-180) interacts with ATP; it reads GDRQTGKT.

The protein belongs to the ATPase alpha/beta chains family. As to quaternary structure, F-type ATPases have 2 components, CF(1) - the catalytic core - and CF(0) - the membrane proton channel. CF(1) has five subunits: alpha(3), beta(3), gamma(1), delta(1), epsilon(1). CF(0) has three main subunits: a(1), b(2) and c(9-12). The alpha and beta chains form an alternating ring which encloses part of the gamma chain. CF(1) is attached to CF(0) by a central stalk formed by the gamma and epsilon chains, while a peripheral stalk is formed by the delta and b chains.

Its subcellular location is the cell membrane. The enzyme catalyses ATP + H2O + 4 H(+)(in) = ADP + phosphate + 5 H(+)(out). Its function is as follows. Produces ATP from ADP in the presence of a proton gradient across the membrane. The alpha chain is a regulatory subunit. In Leifsonia xyli subsp. xyli (strain CTCB07), this protein is ATP synthase subunit alpha.